We begin with the raw amino-acid sequence, 186 residues long: dCTP deaminase (186 aa).

107–112 lines the dCTP pocket; that stretch reads KSTYAR. Glu133 serves as the catalytic Proton donor/acceptor. DCTP is bound by residues Gln152, Tyr166, and Gln176.

Belongs to the dCTP deaminase family. Homotrimer.

It carries out the reaction dCTP + H2O + H(+) = dUTP + NH4(+). The protein operates within pyrimidine metabolism; dUMP biosynthesis; dUMP from dCTP (dUTP route): step 1/2. Catalyzes the deamination of dCTP to dUTP. This Campylobacter fetus subsp. fetus (strain 82-40) protein is dCTP deaminase.